Consider the following 502-residue polypeptide: Probable cytosol aminopeptidase (502 aa).

Mn(2+) contacts are provided by Lys269 and Asp274. Lys281 is an active-site residue. 3 residues coordinate Mn(2+): Asp292, Asp351, and Glu353. Arg355 is an active-site residue.

This sequence belongs to the peptidase M17 family. Mn(2+) is required as a cofactor.

It localises to the cytoplasm. It carries out the reaction Release of an N-terminal amino acid, Xaa-|-Yaa-, in which Xaa is preferably Leu, but may be other amino acids including Pro although not Arg or Lys, and Yaa may be Pro. Amino acid amides and methyl esters are also readily hydrolyzed, but rates on arylamides are exceedingly low.. It catalyses the reaction Release of an N-terminal amino acid, preferentially leucine, but not glutamic or aspartic acids.. In terms of biological role, presumably involved in the processing and regular turnover of intracellular proteins. Catalyzes the removal of unsubstituted N-terminal amino acids from various peptides. This Shewanella piezotolerans (strain WP3 / JCM 13877) protein is Probable cytosol aminopeptidase.